We begin with the raw amino-acid sequence, 218 residues long: External core antigen (218 aa).

Positions 1–19 (MYLFHLCLVFACVPCPTFQ) are cleaved as a signal peptide. Positions 26-28 (GWL) are HBEAG. The segment covering 180 to 211 (RRRGGARASRSPRRRTPSPRRRRSQSPRRRRS) has biased composition (basic residues). The segment at 180 to 218 (RRRGGARASRSPRRRTPSPRRRRSQSPRRRRSQSPSANC) is disordered. The 1; half-length repeat unit spans residues 190 to 196 (SPRRRTP). Residues 190-212 (SPRRRTPSPRRRRSQSPRRRRSQ) form a 3 X 8 AA repeats of S-P-R-R-R-R-S-Q region. Positions 190–218 (SPRRRTPSPRRRRSQSPRRRRSQSPSANC) are excised as a propeptide. 2 consecutive repeat copies span residues 197–204 (SPRRRRSQ) and 205–212 (SPRRRRSQ).

It belongs to the orthohepadnavirus precore antigen family. As to quaternary structure, homodimerizes. Phosphorylated. Post-translationally, cleaved by host furin.

It localises to the secreted. Its subcellular location is the host nucleus. In terms of biological role, may regulate immune response to the intracellular capsid in acting as a T-cell tolerogen, by having an immunoregulatory effect which prevents destruction of infected cells by cytotoxic T-cells. This immune regulation may predispose to chronicity during perinatal infections and prevent severe liver injury during adult infections. This chain is External core antigen, found in Marmota monax (Woodchuck).